The following is a 122-amino-acid chain: Basic phospholipase A2 homolog (122 aa).

7 disulfide bridges follow: cysteine 26/cysteine 115, cysteine 28/cysteine 44, cysteine 43/cysteine 95, cysteine 49/cysteine 122, cysteine 50/cysteine 88, cysteine 57/cysteine 81, and cysteine 75/cysteine 86. The tract at residues 105 to 117 (KRYMTYPNILCSS) is important for membrane-damaging activities in eukaryotes and bacteria; heparin-binding.

It belongs to the phospholipase A2 family. Group II subfamily. N49 sub-subfamily. In terms of tissue distribution, expressed by the venom gland.

The protein resides in the secreted. The protein is Basic phospholipase A2 homolog of Gloydius halys (Chinese water mocassin).